The primary structure comprises 147 residues: Globin, polymeric component P3 (147 aa).

Positions 2 to 146 (HLTADQVAAL…ISDALIAGLE (145 aa)) constitute a Globin domain. Residue H96 coordinates heme b.

This sequence belongs to the globin family. As to quaternary structure, polymer.

The polypeptide is Globin, polymeric component P3 (Glycera dibranchiata (Bloodworm)).